Here is a 2766-residue protein sequence, read N- to C-terminus: Thyroglobulin (2766 aa).

The signal sequence occupies residues 1–20 (MTALVLWVSTLLSSVCLVAA). Tyr-25 bears the Iodotyrosine; alternate mark. Position 25 is a sulfotyrosine; alternate (Tyr-25). Tyr-25 is subject to Thyroxine; alternate. Position 25 is a triiodothyronine; alternate (Tyr-25). 4 consecutive Thyroglobulin type-1 domains span residues 32–93 (LRPC…PTVC), 94–161 (LSFC…PTRC), 162–298 (PRSC…RFRC), and 299–359 (PTKC…PPSC). 8 disulfide bridges follow: Cys-35/Cys-53, Cys-64/Cys-71, Cys-73/Cys-93, Cys-97/Cys-121, Cys-132/Cys-139, Cys-141/Cys-161, Cys-165/Cys-184, and Cys-195/Cys-236. At Tyr-109 the chain carries Iodotyrosine. A glycan (N-linked (GlcNAc...) asparagine) is linked at Asn-111. Tyr-150 bears the Iodotyrosine; alternate mark. Tyr-150 carries the diiodotyrosine; alternate modification. An N-linked (GlcNAc...) asparagine glycan is attached at Asn-199. 2 positions are modified to iodotyrosine: Tyr-235 and Tyr-259. 9 disulfides stabilise this stretch: Cys-302–Cys-320, Cys-331–Cys-337, Cys-339–Cys-359, Cys-365–Cys-620, Cys-408–Cys-608, Cys-631–Cys-636, Cys-638–Cys-658, Cys-662–Cys-687, and Cys-698–Cys-703. Asn-484 and Asn-496 each carry an N-linked (GlcNAc...) asparagine glycan. Thyroglobulin type-1 domains are found at residues 605–658 (AQAC…RPRC), 659–726 (PTKC…AKQC), 727–922 (PSVC…IPAC), 923–1074 (PGPC…MPQC), 1075–1146 (PTNC…SAQC), and 1147–1211 (PGLC…QPAC). Tyr-704 carries the iodotyrosine; alternate modification. The residue at position 704 (Tyr-704) is a Thyroxine; alternate. Tyr-704 bears the Triiodothyronine; alternate mark. A Diiodotyrosine; alternate modification is found at Tyr-704. Disulfide bonds link Cys-705–Cys-726, Cys-730–Cys-763, Cys-774–Cys-899, Cys-901–Cys-922, Cys-926–Cys-1032, Cys-1043–Cys-1050, Cys-1052–Cys-1074, Cys-1078–Cys-1109, Cys-1127–Cys-1146, Cys-1150–Cys-1170, Cys-1182–Cys-1189, Cys-1191–Cys-1211, Cys-1216–Cys-1265, Cys-1232–Cys-1246, Cys-1306–Cys-1356, and Cys-1331–Cys-1347. The N-linked (GlcNAc...) asparagine glycan is linked to Asn-748. Tyr-785 carries the iodotyrosine modification. Asn-817 carries an N-linked (GlcNAc...) asparagine glycan. An Iodotyrosine; alternate modification is found at Tyr-867. Tyr-867 is modified (diiodotyrosine; alternate). Tyr-884 is subject to Diiodotyrosine. An N-linked (GlcNAc...) asparagine glycan is attached at Asn-948. An Iodotyrosine; alternate modification is found at Tyr-993. Tyr-993 is subject to Diiodotyrosine; alternate. N-linked (GlcNAc...) asparagine glycosylation occurs at Asn-1141. Tyr-1310 is subject to Iodotyrosine. Position 1310 is a thyroxine (Tyr-1310). Residues Asn-1349 and Asn-1365 are each glycosylated (N-linked (GlcNAc...) asparagine). Disulfide bonds link Cys-1441-Cys-1458, Cys-1461-Cys-1472, Cys-1475-Cys-1489, Cys-1492-Cys-1509, Cys-1513-Cys-1522, Cys-1542-Cys-1564, Cys-1602-Cys-1626, Cys-1606-Cys-1612, and Cys-1638-Cys-1661. 3 Type II repeats span residues 1455 to 1468 (ALGC…SFSQ), 1469 to 1485 (DGRC…EQAG), and 1486 to 1502 (SSAC…ITTG). Residues 1510-1564 (VTDCQKNEAGLQCDQNGQYQASQKNRDSGEVFCVDSEGRKLQWLQTEAGLSESQC) enclose the Thyroglobulin type-1 11 domain. The Type IIIA repeat unit spans residues 1602–1722 (CLTDCANDEA…GANLTDTHTY (121 aa)). N-linked (GlcNAc...) asparagine glycans are attached at residues Asn-1715, Asn-1729, Asn-1773, and Asn-1864. 4 cysteine pairs are disulfide-bonded: Cys-1723/Cys-1748, Cys-1727/Cys-1733, Cys-1732/Cys-1834, and Cys-1759/Cys-1776. One copy of the Type IIIB repeat lies at 1723-1889 (CLLACDNDSC…LFSAEQANLW (167 aa)). Cystine bridges form between Cys-1890/Cys-1916, Cys-1894/Cys-1901, Cys-1925/Cys-1936, Cys-1993/Cys-2021, Cys-1997/Cys-2003, Cys-2002/Cys-2073, and Cys-2032/Cys-2045. The Type IIIA repeat unit spans residues 1890 to 1992 (CLSRCAQEPI…GKLISNGFFE (103 aa)). Asn-1935 is a glycosylation site (N-linked (GlcNAc...) asparagine). Residues 1993–2125 (CERLCDRDPC…AATSNFSMAQ (133 aa)) form a Type IIIB repeat. Asn-2010 carries an N-linked (GlcNAc...) asparagine glycan. A glycan (N-linked (GlcNAc...) asparagine) is linked at Asn-2120. Residues 2126-2183 (DFCLQQCSRHQDCLVTTLQIQPGVVRCVFYPDIQNCIHSLRSHTCWLLLHEEATYIYR) form a Type IIIA repeat. 3 disulfide bridges follow: Cys-2128–Cys-2152, Cys-2132–Cys-2138, and Cys-2161–Cys-2170. Iodotyrosine is present on Tyr-2182. The segment at 2186 to 2766 (GIPLVQSDVT…LEPVPKSYSK (581 aa)) is cholinesterase-like (ChEL). The N-linked (GlcNAc...) asparagine glycan is linked to Asn-2249. A disulfide bond links Cys-2263 and Cys-2280. Asn-2294 is a glycosylation site (N-linked (GlcNAc...) asparagine). A disulfide bond links Cys-2441 and Cys-2452. The residue at position 2539 (Tyr-2539) is a Thyroxine. Iodotyrosine; alternate is present on Tyr-2572. The residue at position 2572 (Tyr-2572) is a Thyroxine; alternate. Position 2572 is a triiodothyronine; alternate (Tyr-2572). Diiodotyrosine; alternate is present on Tyr-2572. A glycan (N-linked (GlcNAc...) asparagine) is linked at Asn-2581. An iodotyrosine mark is found at Tyr-2586 and Tyr-2616. Cys-2590 and Cys-2714 are joined by a disulfide. Tyr-2696 carries the diiodotyrosine modification. Residues 2729–2766 (GAKDAQLTKSEEEDLEVGPGLEEDLSGSLEPVPKSYSK) are disordered. Residues 2739–2753 (EEEDLEVGPGLEEDL) show a composition bias toward acidic residues. Position 2764 is an iodotyrosine; alternate (Tyr-2764). The residue at position 2764 (Tyr-2764) is a Thyroxine; alternate. Tyr-2764 carries the post-translational modification Triiodothyronine; alternate. Position 2764 is a diiodotyrosine; alternate (Tyr-2764).

This sequence belongs to the type-B carboxylesterase/lipase family. In terms of assembly, monomer. Homodimer (via ChEL region); occurs in the endoplasmic reticulum and is required for export to the Golgi apparatus. Homooligomer; disulfide-linked; stored in this form in the thyroid follicle lumen. Iodinated on tyrosine residues by TPO. There are 4 pairs of iodinated tyrosines used for coupling: acceptor Tyr-25 is coupled to donor Tyr-150 or Tyr-235, acceptor Tyr-2572 is coupled to donor Tyr-2539, acceptor Tyr-2764 in monomer 1 is coupled to donor Tyr-2764 in monomer 2 and acceptor Tyr-1310 in monomer 1 is coupled to donor Tyr-109 in monomer 2. In terms of processing, sulfated tyrosines are desulfated during iodination. Post-translationally, undergoes sequential proteolysis by cathepsins to release thyroxine (T4) and triiodothyronine (T3) hormones. In the thyroid follicle lumen, cross-linked TG (storage form) is solubilized by limited proteolysis mediated by cathepsins CTSB and/or CTSL. Partially cleaved TG is further processed by CTSK/cathepsin K and/or CTSL resulting in the release of T4. Following endocytosis, further processing occurs leading to the release of T3 and more T4 hormones. As to expression, specifically expressed in the thyroid gland.

It is found in the secreted. Its function is as follows. Acts as a substrate for the production of iodinated thyroid hormones thyroxine (T4) and triiodothyronine (T3). The synthesis of T3 and T4 involves iodination of selected tyrosine residues of TG/thyroglobulin followed by their oxidative coupling. Following TG re-internalization and lysosomal-mediated proteolysis, T3 and T4 are released from the polypeptide backbone leading to their secretion into the bloodstream. One dimer produces 7 thyroid hormone molecules. The chain is Thyroglobulin (Tg) from Mus musculus (Mouse).